A 370-amino-acid chain; its full sequence is Protein maelstrom 2 (370 aa).

Positions 2-68 form a DNA-binding region, HMG box; it reads AQNKPNAFMA…VLERESKTER (67 aa).

It belongs to the maelstrom family.

It is found in the cytoplasm. It localises to the nucleus. Its function is as follows. Involved both in the piRNA and miRNA metabolic processes. As a component of the meiotic nuage, plays a central role during oogenesis by repressing transposable elements and preventing their mobilization, which is essential for the germline integrity. Repression of transposable elements is mediated via the piRNA metabolic process, which mediates the repression of transposable elements during meiosis by forming complexes composed of piRNAs and Piwi proteins and governs the repression of transposons. As a nuclear component, it is required for proper differentiation in the germline stem cell (GSC) lineage by repressing microRNA-7 (miR-7), thereby acting as an indirect regulator of bag-of-marbles (Bam). Acts by binding to the promoter of miR-7 gene and repressing its expression; miR-7 repression alleviates the Bam repression by miR-7, thereby allowing differentiation in the germline stem cell (GSC) lineage. The protein is Protein maelstrom 2 (mael2) of Drosophila pseudoobscura pseudoobscura (Fruit fly).